A 119-amino-acid chain; its full sequence is Microtubule nucleation factor SSNA1 (119 aa).

Thr-2 carries the N-acetylthreonine modification. The interval 2-32 (TQQGAALQNYNNELVKCIEELCQKREELCRQ) is important for localization to the centrosome. Residues 13 to 70 (NELVKCIEELCQKREELCRQIQEEEDEKQRLQNEVRQLTEKLARVNENLARKIASRNE) adopt a coiled-coil conformation.

Belongs to the SSNA1 family. Self-associates to form fibrils. Also forms dimers as well as monomers. Interacts with SPAST. In terms of tissue distribution, widely expressed.

It is found in the nucleus. The protein resides in the cytoplasm. The protein localises to the cytoskeleton. Its subcellular location is the microtubule organizing center. It localises to the centrosome. It is found in the centriole. The protein resides in the midbody. The protein localises to the flagellum basal body. Its subcellular location is the flagellum axoneme. It localises to the cell projection. It is found in the axon. Functionally, microtubule-binding protein which stabilizes dynamic microtubules by slowing growth and shrinkage at both plus and minus ends and serves as a sensor of microtubule damage, protecting microtubules from the microtubule-severing enzyme SPAST. Induces microtubule branching which is mediated by the formation of long SSNA1 fibrils which guide microtubule protofilaments to split apart from the mother microtubule and form daughter microtubules. Plays a role in axon outgrowth and branching. Required for cell division. This Homo sapiens (Human) protein is Microtubule nucleation factor SSNA1.